A 275-amino-acid chain; its full sequence is MSQQLQQIIDNAWDNRADLSPKAAPADVREAVAHAIEQLDKGALRVAEKKDGDWVVNQWLKKAVLLSFRLEDNAPMPAGGYSQFYDKVPSKFANYTAEDFAAGGFRVVPPAIARRGSYIAKNVVLMPSYTNIGAYVDEGTMVDTWATVGSCAQIGKNVHLSGGVGIGGVLEPLQANPVIIEDNCFIGARSEVVEGVIVEENSVISMGVYLGQSTKIYDRETGEVSYGRIPAGSVVVAGNLPSKDGSHSLYCAVIVKKVDAKTRAKVGLNELLRGD.

Belongs to the transferase hexapeptide repeat family.

Its subcellular location is the cytoplasm. The catalysed reaction is (S)-2,3,4,5-tetrahydrodipicolinate + succinyl-CoA + H2O = (S)-2-succinylamino-6-oxoheptanedioate + CoA. The protein operates within amino-acid biosynthesis; L-lysine biosynthesis via DAP pathway; LL-2,6-diaminopimelate from (S)-tetrahydrodipicolinate (succinylase route): step 1/3. This Paraburkholderia phymatum (strain DSM 17167 / CIP 108236 / LMG 21445 / STM815) (Burkholderia phymatum) protein is 2,3,4,5-tetrahydropyridine-2,6-dicarboxylate N-succinyltransferase.